The primary structure comprises 311 residues: Ribosomal protein L11 methyltransferase (311 aa).

S-adenosyl-L-methionine-binding residues include T162, G183, D205, and N248.

It belongs to the methyltransferase superfamily. PrmA family.

It localises to the cytoplasm. The catalysed reaction is L-lysyl-[protein] + 3 S-adenosyl-L-methionine = N(6),N(6),N(6)-trimethyl-L-lysyl-[protein] + 3 S-adenosyl-L-homocysteine + 3 H(+). Methylates ribosomal protein L11. In Bacillus pumilus (strain SAFR-032), this protein is Ribosomal protein L11 methyltransferase.